We begin with the raw amino-acid sequence, 468 residues long: Procollagen C-endopeptidase enhancer 1 (468 aa).

The signal sequence occupies residues M1–G24. N28 is a glycosylation site (N-linked (GlcNAc...) asparagine). Disulfide bonds link C36–C62, C89–C111, C158–C185, and C212–C235. 2 consecutive CUB domains span residues C36–R148 and C158–L272. T41 carries the post-translational modification Phosphothreonine. Phosphoserine is present on S49. The tract at residues T271–C341 is disordered. The segment covering L272–S281 has biased composition (basic and acidic residues). 2 disulfide bridges follow: C341-C409 and C356-C460. The 120-residue stretch at C341 to C460 folds into the NTR domain. N-linked (GlcNAc...) asparagine glycosylation occurs at N454.

In terms of assembly, interacts with EFEMP2. In terms of tissue distribution, expressed at highest levels in collagen-rich tissues, especially tendon. Also expressed in cornea and sterna.

It localises to the secreted. In terms of biological role, binds to the C-terminal propeptide of type I procollagen and enhances procollagen C-proteinase activity. In Rattus norvegicus (Rat), this protein is Procollagen C-endopeptidase enhancer 1 (Pcolce).